We begin with the raw amino-acid sequence, 379 residues long: DNA (cytosine-5)-methyltransferase (379 aa).

The 363-residue stretch at 4 to 366 (LRVLEFYSGI…KVLVSPNEEE (363 aa)) folds into the SAM-dependent MTase C5-type domain. C78 is an active-site residue. Positions 178 to 192 (KKEQDKHNEKVDENK) are enriched in basic and acidic residues. A disordered region spans residues 178–205 (KKEQDKHNEKVDENKLNNNSNNNNEQNK). The span at 193–203 (LNNNSNNNNEQ) shows a compositional bias: low complexity.

It belongs to the class I-like SAM-binding methyltransferase superfamily. C5-methyltransferase family.

It is found in the nucleus. The catalysed reaction is a 2'-deoxycytidine in DNA + S-adenosyl-L-methionine = a 5-methyl-2'-deoxycytidine in DNA + S-adenosyl-L-homocysteine + H(+). Its function is as follows. Involved in epigenetic gene silencing. Methylates specific cytosine residues in the retrotransposons DIRS-1 and Skipper. The polypeptide is DNA (cytosine-5)-methyltransferase (dnmA) (Dictyostelium discoideum (Social amoeba)).